The chain runs to 138 residues: UPF0251 protein Dole_1957 (138 aa).

This sequence belongs to the UPF0251 family.

In Desulfosudis oleivorans (strain DSM 6200 / JCM 39069 / Hxd3) (Desulfococcus oleovorans), this protein is UPF0251 protein Dole_1957.